Here is a 266-residue protein sequence, read N- to C-terminus: Small ribosomal subunit protein uS3 (266 aa).

Residues V39 to R107 enclose the KH type-2 domain. The disordered stretch occupies residues P214–E266. Composition is skewed to basic and acidic residues over residues R230–E241 and G257–E266.

Belongs to the universal ribosomal protein uS3 family. Part of the 30S ribosomal subunit. Forms a tight complex with proteins S10 and S14.

In terms of biological role, binds the lower part of the 30S subunit head. Binds mRNA in the 70S ribosome, positioning it for translation. In Burkholderia mallei (strain NCTC 10247), this protein is Small ribosomal subunit protein uS3.